An 80-amino-acid polypeptide reads, in one-letter code: UPF0270 protein VFMJ11_0205 (80 aa).

It belongs to the UPF0270 family.

This is UPF0270 protein VFMJ11_0205 from Aliivibrio fischeri (strain MJ11) (Vibrio fischeri).